The sequence spans 988 residues: Echinoderm microtubule-associated protein-like 4 (988 aa).

N-acetylmethionine is present on Met1. Positions 1–260 (MDGFAGSLDD…IPSDVDNYDD (260 aa)) are microtubule-binding. Phosphoserine is present on residues Ser7, Ser13, Ser16, Ser61, and Ser79. A coiled-coil region spans residues 14 to 63 (AASTSDVQDRLSALESRVQQQEDEITVLKAALADVLRRLAISEDHVASVK). Thr96 carries the phosphothreonine modification. Residues 106–194 (TLSSAAKSGT…WENSDDSRNK (89 aa)) are disordered. Positions 114–134 (GTEKKKEKPQGQREKKEDSHS) are enriched in basic and acidic residues. Ser134 is subject to Phosphoserine; by NEK7. Residues 137-155 (QSPQIRASPSPQPSSQPLQ) are compositionally biased toward low complexity. Ser144 is subject to Phosphoserine; by NEK6. Ser146 is subject to Phosphoserine; by NEK7. The segment covering 156-168 (INRQTPESKSSAP) has biased composition (polar residues). Position 171 is a phosphoserine (Ser171). A compositionally biased stretch (basic and acidic residues) spans 176–193 (PTAEKSHNSWENSDDSRN). Phosphoserine is present on Ser200. Phosphothreonine is present on Thr201. A Phosphotyrosine modification is found at Tyr237. Thr248 is subject to Phosphothreonine. 13 WD repeats span residues 270–308 (LKLE…LFNY), 312–359 (TQRH…VWDS), 367–407 (VIGL…VWDW), 414–449 (AEIK…FWTW), 456–495 (RKQG…IWSK), 511–549 (QINR…LWDH), 554–590 (EREI…LRGT), 593–632 (DGFQ…MWNS), 636–673 (RLEW…VLDA), 679–715 (VSIH…LYTV), 722–761 (YSRY…YWDI), 771–829 (RSDC…LFQY), and 836–875 (APSH…QWKL). At Thr620 the chain carries Phosphothreonine; by NEK6 and NEK7. Positions 887 to 988 (ITDASVTKTP…EEERGITPLC (102 aa)) are disordered. Over residues 890–904 (ASVTKTPASSSETAR) the composition is skewed to polar residues. Phosphoserine is present on residues Ser906, Ser908, and Ser914. Polar residues predominate over residues 927 to 939 (MGSSPTLVENSLE). Acidic residues predominate over residues 944-953 (PSEEQSEWGS).

Belongs to the WD repeat EMAP family. Homotrimer; self-association is mediated by the N-terminal coiled coil. Interacts (via WD repeats) with NUDC. Interacts with alpha- and beta-tubulin during mitosis. In terms of processing, phosphorylated during mitosis. Phosphorylation at Ser-144 and Ser-146 promotes its dissociation from microtubules during mitosis which is required for efficient chromosome congression.

The protein resides in the cytoplasm. It is found in the cytoskeleton. The protein localises to the spindle. Its subcellular location is the microtubule organizing center. It localises to the midbody. Functionally, essential for the stability of microtubules (MTs). Essential for the formation of MTs. Required for the organization of the mitotic spindle and for the proper attachment of kinetochores to MTs. Promotes the recruitment of NUDC to the mitotic spindle for mitotic progression. This chain is Echinoderm microtubule-associated protein-like 4 (Eml4), found in Mus musculus (Mouse).